The following is a 459-amino-acid chain: Cysteine--tRNA ligase (459 aa).

Cysteine 28 lines the Zn(2+) pocket. The 'HIGH' region motif lies at 30–40 (VTIYDLCHIGH). Residues cysteine 209, histidine 234, and glutamate 238 each contribute to the Zn(2+) site. The short motif at 266–270 (KMSKS) is the 'KMSKS' region element. Lysine 269 contributes to the ATP binding site.

The protein belongs to the class-I aminoacyl-tRNA synthetase family. In terms of assembly, monomer. Requires Zn(2+) as cofactor.

It localises to the cytoplasm. It carries out the reaction tRNA(Cys) + L-cysteine + ATP = L-cysteinyl-tRNA(Cys) + AMP + diphosphate. This chain is Cysteine--tRNA ligase, found in Vibrio cholerae serotype O1 (strain ATCC 39541 / Classical Ogawa 395 / O395).